The chain runs to 262 residues: Probable DNA polymerase sliding clamp 1 (262 aa).

A DNA-binding region spans residues 67–86; the sequence is KCEHTYELGVNVLNMFKLLR.

This sequence belongs to the PCNA family.

Functionally, sliding clamp subunit. Responsible for tethering the catalytic subunit of DNA polymerase to DNA during high-speed replication. In Chlorella (PBCV-1), this protein is Probable DNA polymerase sliding clamp 1.